The sequence spans 112 residues: Putative pterin-4-alpha-carbinolamine dehydratase (112 aa).

The protein belongs to the pterin-4-alpha-carbinolamine dehydratase family.

The catalysed reaction is (4aS,6R)-4a-hydroxy-L-erythro-5,6,7,8-tetrahydrobiopterin = (6R)-L-erythro-6,7-dihydrobiopterin + H2O. The chain is Putative pterin-4-alpha-carbinolamine dehydratase from Shewanella piezotolerans (strain WP3 / JCM 13877).